Consider the following 675-residue polypeptide: uncharacterized protein (675 aa).

4 consecutive transmembrane segments (helical) span residues 2–22 (QHTFIYDTCLWILSILIDFFF), 397–417 (LFLLALGALPGAILFSPVFIA), 448–468 (LLVALGMTPILYSFYALLCCY), and 481–501 (IFVYTVPIISTFLFPMVTYAA). Disordered stretches follow at residues 616–635 (YSPNPSALPPSDEEEKDIND) and 646–675 (QRMGQRMTEIRSRDTPPEEVFSESDEELSD). Over residues 665-675 (VFSESDEELSD) the composition is skewed to acidic residues. Serine 669 carries the post-translational modification Phosphoserine.

It belongs to the 1-acyl-sn-glycerol-3-phosphate acyltransferase family.

Its subcellular location is the endoplasmic reticulum membrane. This is an uncharacterized protein from Schizosaccharomyces pombe (strain 972 / ATCC 24843) (Fission yeast).